Reading from the N-terminus, the 162-residue chain is Toluate 1,2-dioxygenase subunit beta (162 aa).

The protein belongs to the bacterial ring-hydroxylating dioxygenase beta subunit family. This dioxygenase system consists of three proteins: the two subunits of the hydroxylase component (XylX and XylY), and an electron transfer component (XylZ).

The protein operates within xenobiotic degradation; toluene degradation. The sequence is that of Toluate 1,2-dioxygenase subunit beta (xylY) from Pseudomonas putida (Arthrobacter siderocapsulatus).